A 394-amino-acid polypeptide reads, in one-letter code: Ribulose bisphosphate carboxylase large chain (394 aa).

Position 5 is an N6,N6,N6-trimethyllysine (lysine 5). Substrate is bound by residues asparagine 114 and threonine 164. Lysine 166 acts as the Proton acceptor in catalysis. Lysine 168 lines the substrate pocket. The Mg(2+) site is built by lysine 192, aspartate 194, and glutamate 195. Lysine 192 is subject to N6-carboxylysine. Catalysis depends on histidine 285, which acts as the Proton acceptor. Substrate-binding residues include arginine 286, histidine 318, and serine 370.

The protein belongs to the RuBisCO large chain family. Type I subfamily. Heterohexadecamer of 8 large chains and 8 small chains; disulfide-linked. The disulfide link is formed within the large subunit homodimers. Mg(2+) is required as a cofactor. Post-translationally, the disulfide bond which can form in the large chain dimeric partners within the hexadecamer appears to be associated with oxidative stress and protein turnover.

It is found in the plastid. Its subcellular location is the chloroplast. It catalyses the reaction 2 (2R)-3-phosphoglycerate + 2 H(+) = D-ribulose 1,5-bisphosphate + CO2 + H2O. It carries out the reaction D-ribulose 1,5-bisphosphate + O2 = 2-phosphoglycolate + (2R)-3-phosphoglycerate + 2 H(+). RuBisCO catalyzes two reactions: the carboxylation of D-ribulose 1,5-bisphosphate, the primary event in carbon dioxide fixation, as well as the oxidative fragmentation of the pentose substrate in the photorespiration process. Both reactions occur simultaneously and in competition at the same active site. The protein is Ribulose bisphosphate carboxylase large chain (rbcL) of Nelumbo lutea (American lotus).